Consider the following 369-residue polypeptide: GTPase Obg (369 aa).

The Obg domain occupies 1–159 (MKFIDEAKIE…RELRLELKVL (159 aa)). The disordered stretch occupies residues 128 to 148 (IHFKSSTNRAPRQKSEGKEGE). The 174-residue stretch at 160-333 (ADIGLLGMPN…LVTEIYEYIA (174 aa)) folds into the OBG-type G domain. Residues 166 to 173 (GMPNAGKS), 191 to 195 (FTTLH), 213 to 216 (DIPG), 283 to 286 (NKLD), and 314 to 316 (SAL) each bind GTP. The Mg(2+) site is built by Ser173 and Thr193.

Belongs to the TRAFAC class OBG-HflX-like GTPase superfamily. OBG GTPase family. As to quaternary structure, monomer. Mg(2+) serves as cofactor.

It localises to the cytoplasm. Functionally, an essential GTPase which binds GTP, GDP and possibly (p)ppGpp with moderate affinity, with high nucleotide exchange rates and a fairly low GTP hydrolysis rate. Plays a role in control of the cell cycle, stress response, ribosome biogenesis and in those bacteria that undergo differentiation, in morphogenesis control. This chain is GTPase Obg, found in Janthinobacterium sp. (strain Marseille) (Minibacterium massiliensis).